The chain runs to 188 residues: dCTP deaminase (188 aa).

DCTP-binding positions include 111-116 (KSTYAR), 135-137 (TLE), Gln156, Tyr170, and Gln180. The active-site Proton donor/acceptor is Glu137.

Belongs to the dCTP deaminase family. In terms of assembly, homotrimer.

It catalyses the reaction dCTP + H2O + H(+) = dUTP + NH4(+). Its pathway is pyrimidine metabolism; dUMP biosynthesis; dUMP from dCTP (dUTP route): step 1/2. Its function is as follows. Catalyzes the deamination of dCTP to dUTP. The polypeptide is dCTP deaminase (Pseudomonas putida (strain GB-1)).